The primary structure comprises 385 residues: Protein delta homolog 1 (385 aa).

The first 23 residues, 1–23 (MIATGALLRVLLLLLAFGHSTYG), serve as a signal peptide directing secretion. EGF-like domains follow at residues 24–55 (AECD…PLCD), 53–86 (LCDK…KFCE), 88–125 (DVRA…KDCQ), 127–168 (KAGP…NFCE), 172–208 (ATNS…KTCS), and 210–247 (PVSN…PTCA). The Extracellular portion of the chain corresponds to 24-305 (AECDPPCDPQ…KSTPLLTEGQ (282 aa)). Intrachain disulfides connect Cys26–Cys37, Cys30–Cys43, Cys45–Cys54, Cys57–Cys68, Cys63–Cys74, Cys76–Cys85, Cys92–Cys103, Cys97–Cys113, Cys115–Cys124, Cys131–Cys144, Cys138–Cys156, and Cys158–Cys167. O-linked (GalNAc...) serine glycosylation is present at Ser94. An N-linked (GlcNAc...) asparagine glycan is attached at Asn100. Asn165 is a glycosylation site (N-linked (GlcNAc...) asparagine; atypical; partial). Asn174 is a glycosylation site (N-linked (GlcNAc...) asparagine; atypical). 6 disulfide bridges follow: Cys176/Cys187, Cys181/Cys196, Cys198/Cys207, Cys214/Cys225, Cys219/Cys235, and Cys237/Cys246. O-linked (GalNAc...) serine glycosylation occurs at Ser216. A glycan (O-linked (GalNAc...) threonine) is linked at Thr224. Residue Thr258 is glycosylated (O-linked (GalNAc...) threonine). O-linked (GalNAc...) threonine; partial glycosylation occurs at Thr267. Thr271 carries O-linked (GalNAc...) threonine glycosylation. A glycan (N-linked (GlcNAc...) asparagine) is linked at Asn295. Residues 306 to 329 (AICFTILGVLTSLVVLGTVAIVFL) traverse the membrane as a helical segment. Over 330–385 (NKCETWVSNLRYNHTFRKKKNLLLQYNSGEELAVNIIFPEKIDMTTFNKEAGDEEI) the chain is Cytoplasmic.

In terms of assembly, monomer. Interacts with SH3RF2. Post-translationally, N- and O-glycosylated. As to expression, highly expressed in fetal liver, placenta, adult adrenal gland, brain, testis and ovary and, to a lesser degree, in adult kidney, muscle, thymus and heart.

It localises to the membrane. It is found in the cytoplasm. Functionally, may have a role in neuroendocrine differentiation. Inhibits adipocyte differentiation. The chain is Protein delta homolog 1 (Dlk1) from Mus musculus (Mouse).